The primary structure comprises 381 residues: Putative glycosyltransferase EpsD (381 aa).

Belongs to the glycosyltransferase group 1 family. Glycosyltransferase 4 subfamily.

Its function is as follows. May be involved in the production of the exopolysaccharide (EPS) component of the extracellular matrix during biofilm formation. EPS is responsible for the adhesion of chains of cells into bundles. Required for biofilm maintenance. The protein is Putative glycosyltransferase EpsD (epsD) of Bacillus subtilis (strain 168).